The chain runs to 507 residues: Ribosomal protein uS12 methylthiotransferase RimO (507 aa).

The region spanning 13 to 124 (RRVALLTLGC…ISDRLGAVLA (112 aa)) is the MTTase N-terminal domain. 6 residues coordinate [4Fe-4S] cluster: Cys-22, Cys-58, Cys-87, Cys-205, Cys-209, and Cys-212. In terms of domain architecture, Radical SAM core spans 191–422 (LDTGPVASLK…ALADELCAQR (232 aa)). A TRAM domain is found at 424–497 (EQRLGSTVQV…GVDLVAVPDA (74 aa)).

It belongs to the methylthiotransferase family. RimO subfamily. [4Fe-4S] cluster is required as a cofactor.

Its subcellular location is the cytoplasm. It catalyses the reaction L-aspartate(89)-[ribosomal protein uS12]-hydrogen + (sulfur carrier)-SH + AH2 + 2 S-adenosyl-L-methionine = 3-methylsulfanyl-L-aspartate(89)-[ribosomal protein uS12]-hydrogen + (sulfur carrier)-H + 5'-deoxyadenosine + L-methionine + A + S-adenosyl-L-homocysteine + 2 H(+). Functionally, catalyzes the methylthiolation of an aspartic acid residue of ribosomal protein uS12. The sequence is that of Ribosomal protein uS12 methylthiotransferase RimO from Salinispora tropica (strain ATCC BAA-916 / DSM 44818 / JCM 13857 / NBRC 105044 / CNB-440).